The primary structure comprises 938 residues: Probable outer membrane protein pmp15 (938 aa).

The first 17 residues, Met-1–Ala-17, serve as a signal peptide directing secretion. Positions Asp-659–Phe-938 constitute an Autotransporter domain.

This sequence belongs to the PMP outer membrane protein family.

Its subcellular location is the secreted. The protein resides in the cell wall. It is found in the cell outer membrane. In Chlamydia pneumoniae (Chlamydophila pneumoniae), this protein is Probable outer membrane protein pmp15 (pmp15).